The sequence spans 349 residues: Histidinol-phosphate aminotransferase (349 aa).

N6-(pyridoxal phosphate)lysine is present on Lys-206.

It belongs to the class-II pyridoxal-phosphate-dependent aminotransferase family. Histidinol-phosphate aminotransferase subfamily. As to quaternary structure, homodimer. The cofactor is pyridoxal 5'-phosphate.

The catalysed reaction is L-histidinol phosphate + 2-oxoglutarate = 3-(imidazol-4-yl)-2-oxopropyl phosphate + L-glutamate. Its pathway is amino-acid biosynthesis; L-histidine biosynthesis; L-histidine from 5-phospho-alpha-D-ribose 1-diphosphate: step 7/9. In Hydrogenobaculum sp. (strain Y04AAS1), this protein is Histidinol-phosphate aminotransferase.